Consider the following 307-residue polypeptide: 3-methyl-2-oxobutanoate hydroxymethyltransferase (307 aa).

Aspartate 61 and aspartate 100 together coordinate Mg(2+). Residues 61-62 (DS), aspartate 100, and lysine 130 each bind 3-methyl-2-oxobutanoate. Glutamate 132 is a binding site for Mg(2+). The Proton acceptor role is filled by glutamate 199.

It belongs to the PanB family. Homodecamer; pentamer of dimers. Mg(2+) is required as a cofactor.

Its subcellular location is the cytoplasm. The enzyme catalyses 3-methyl-2-oxobutanoate + (6R)-5,10-methylene-5,6,7,8-tetrahydrofolate + H2O = 2-dehydropantoate + (6S)-5,6,7,8-tetrahydrofolate. The protein operates within cofactor biosynthesis; (R)-pantothenate biosynthesis; (R)-pantoate from 3-methyl-2-oxobutanoate: step 1/2. Catalyzes the reversible reaction in which hydroxymethyl group from 5,10-methylenetetrahydrofolate is transferred onto alpha-ketoisovalerate to form ketopantoate. The polypeptide is 3-methyl-2-oxobutanoate hydroxymethyltransferase (Nitratidesulfovibrio vulgaris (strain ATCC 29579 / DSM 644 / CCUG 34227 / NCIMB 8303 / VKM B-1760 / Hildenborough) (Desulfovibrio vulgaris)).